The primary structure comprises 750 residues: Glutamate carboxypeptidase 2 (750 aa).

Over 1-19 (MWNLLHETDSAVATARRPR) the chain is Cytoplasmic. The residue at position 10 (Ser-10) is a Phosphoserine. A helical; Signal-anchor for type II membrane protein transmembrane segment spans residues 20 to 43 (WLCAGALVLAGGFFLLGFLFGWFI). Over 44–750 (KSSNEATNIT…AAAETLSEVA (707 aa)) the chain is Extracellular. 6 N-linked (GlcNAc...) asparagine glycosylation sites follow: Asn-51, Asn-76, Asn-121, Asn-140, Asn-153, and Asn-195. Substrate contacts are provided by Arg-210 and Asn-257. Positions 269 and 272 each coordinate Ca(2+). Positions 274-587 (ANEYAYRRGI…QVRGGMVFEL (314 aa)) are NAALADase. A glycan (N-linked (GlcNAc...) asparagine) is linked at Asn-336. His-377 and Asp-387 together coordinate Zn(2+). Glu-424 is a binding site for substrate. Residue Glu-424 is the Nucleophile; for NAALADase activity of the active site. Glu-425 provides a ligand contact to Zn(2+). Ca(2+) is bound by residues Glu-433 and Glu-436. Asp-453 is a Zn(2+) binding site. Asn-459 and Asn-476 each carry an N-linked (GlcNAc...) asparagine glycan. Residues 517–518 (SG), Asn-519, 534–536 (RAR), Tyr-552, and 552–553 (YH) each bind substrate. His-553 is a Zn(2+) binding site. The active-site Charge relay system is the Ser-628. N-linked (GlcNAc...) asparagine glycosylation occurs at Asn-638. Residues Asp-666 and His-689 each act as charge relay system in the active site. Residue 699–700 (KY) coordinates substrate.

The protein belongs to the peptidase M28 family. M28B subfamily. In terms of assembly, homodimer. Zn(2+) serves as cofactor. The first two amino acids at the N-terminus of isoform PSMA' appear to be cleaved by limited proteolysis. Post-translationally, the N-terminus is blocked. Highly expressed in prostate epithelium. Detected in urinary bladder, kidney, testis, ovary, fallopian tube, breast, adrenal gland, liver, esophagus, stomach, small intestine, colon and brain (at protein level). Detected in the small intestine, brain, kidney, liver, spleen, colon, trachea, spinal cord and the capillary endothelium of a variety of tumors. Expressed specifically in jejunum brush border membranes. In the brain, highly expressed in the ventral striatum and brain stem. Also expressed in fetal liver and kidney. Isoform PSMA' is the most abundant form in normal prostate. Isoform PSMA-1 is the most abundant form in primary prostate tumors. Isoform PSMA-9 is specifically expressed in prostate cancer.

It is found in the cell membrane. It localises to the cytoplasm. The enzyme catalyses Release of an unsubstituted, C-terminal glutamyl residue, typically from Ac-Asp-Glu or folylpoly-gamma-glutamates.. The NAALADase activity is inhibited by beta-NAAG, quisqualic acid, 2-(phosphonomethyl) pentanedioic acid (PMPA) and EDTA. Activated by cobalt. In terms of biological role, has both folate hydrolase and N-acetylated-alpha-linked-acidic dipeptidase (NAALADase) activity. Has a preference for tri-alpha-glutamate peptides. In the intestine, required for the uptake of folate. In the brain, modulates excitatory neurotransmission through the hydrolysis of the neuropeptide, N-aceylaspartylglutamate (NAAG), thereby releasing glutamate. Involved in prostate tumor progression. Its function is as follows. Also exhibits a dipeptidyl-peptidase IV type activity. In vitro, cleaves Gly-Pro-AMC. This chain is Glutamate carboxypeptidase 2, found in Homo sapiens (Human).